The sequence spans 248 residues: 2,3-bisphosphoglycerate-dependent phosphoglycerate mutase (248 aa).

Residues 8–15 (RHGESEWN), 21–22 (TG), arginine 60, 87–90 (ERHY), lysine 98, 114–115 (RR), and 183–184 (GN) contribute to the substrate site. The active-site Tele-phosphohistidine intermediate is the histidine 9. Glutamate 87 (proton donor/acceptor) is an active-site residue.

It belongs to the phosphoglycerate mutase family. BPG-dependent PGAM subfamily.

It carries out the reaction (2R)-2-phosphoglycerate = (2R)-3-phosphoglycerate. Its pathway is carbohydrate degradation; glycolysis; pyruvate from D-glyceraldehyde 3-phosphate: step 3/5. Catalyzes the interconversion of 2-phosphoglycerate and 3-phosphoglycerate. The sequence is that of 2,3-bisphosphoglycerate-dependent phosphoglycerate mutase from Borrelia garinii subsp. bavariensis (strain ATCC BAA-2496 / DSM 23469 / PBi) (Borreliella bavariensis).